The following is a 721-amino-acid chain: MIAKTYTTMLGGRELSIETGKLAKLASGSVTLRYGDTLLLVTAQAREERSTLDFLPLTVEFEERHYAVGRIPGSFHRREGRPGEHAILSARITDRQIRPLFPKGYRQETQVIITVLSADQQNAPDVLGAIGASAALSLSDIPWNGPTACVRVGMIDGEYVINPTSDQLTRSSLDLVVAGTRDAVNMVEAGAQGVSEETLVGAIEFAHRELQGVLDLIETMRAEVGREKFNFLVDSDLSTDLVPELSEAARAAGLRDALLTTKKQERSANLKALRDRLIAERVPDPEAAGAAEQIEALKAAFAKVEKQELRRLILQEDLRADGRNSKTVRPIWIEARPLPRAHGSAIFTRGETQVLGVTTLGTERDELLVDNLTGETNDRFLLHYNFPPYSTGEVKRVGGQSRREVGHGNLAKRAIRAVLPAFDDFPYVIRVVGEVLESNGSSSMATVCAGTLSLMDAGVPIQAPVAGVAMGLVMEGEQYRILTDILGLEDALGDMDFKVCGTAEGVTALQMDIKVSGVTPAIMREALAQAREARLHILGKMAEVLPAPRPELSPTAPRILTLKINPELIGKVIGPGGKQVRELEAMGAQVTIEEDGNIRIFSADGAAAEAVRQKIEGLTREAKVGEEYEGTVVKTAPFGAFVNLFPGQDGMLHISQMSENRVNAVEDVLNVGDRLRVKIANIDDRGKIDLIRPELEGKIAPREPRAARAGGDRGGRPPRRE.

2 residues coordinate Mg(2+): Asp490 and Asp496. In terms of domain architecture, KH spans 557-618; that stretch reads PRILTLKINP…EAVRQKIEGL (62 aa). The S1 motif domain occupies 625–693; that stretch reads GEEYEGTVVK…DRGKIDLIRP (69 aa). The interval 696-721 is disordered; the sequence is EGKIAPREPRAARAGGDRGGRPPRRE.

Belongs to the polyribonucleotide nucleotidyltransferase family. Requires Mg(2+) as cofactor.

Its subcellular location is the cytoplasm. It carries out the reaction RNA(n+1) + phosphate = RNA(n) + a ribonucleoside 5'-diphosphate. Its function is as follows. Involved in mRNA degradation. Catalyzes the phosphorolysis of single-stranded polyribonucleotides processively in the 3'- to 5'-direction. This is Polyribonucleotide nucleotidyltransferase from Deinococcus geothermalis (strain DSM 11300 / CIP 105573 / AG-3a).